The chain runs to 382 residues: uncharacterized protein (382 aa).

Helical transmembrane passes span 14–34 (GLLL…LWLA), 45–65 (VVSS…GYVI), 79–99 (FIFA…SWLA), 102–122 (FVAG…LMCS), 131–151 (LLAA…LLVS), 157–177 (LMSV…PLLF), 204–224 (LGVN…GLMP), 235–255 (ASIG…QWPI), 270–290 (VQVF…AMAP), 291–311 (ALFI…AWAC), 325–345 (ALLL…AMLM), and 348–368 (FSDN…LLML).

This sequence belongs to the major facilitator superfamily. YcaD (TC 2.A.1.26) family.

The protein resides in the cell inner membrane. This is an uncharacterized protein from Shigella sonnei (strain Ss046).